The primary structure comprises 437 residues: Phosphomethylpyrimidine synthase (437 aa).

Residues Asn-69, Met-98, Tyr-127, His-163, 185 to 187 (SRG), 226 to 229 (DACR), and Glu-265 each bind substrate. His-269 is a Zn(2+) binding site. Substrate is bound at residue Tyr-292. His-333 serves as a coordination point for Zn(2+). Residues Cys-409, Cys-412, and Cys-416 each coordinate [4Fe-4S] cluster.

It belongs to the ThiC family. [4Fe-4S] cluster serves as cofactor.

It catalyses the reaction 5-amino-1-(5-phospho-beta-D-ribosyl)imidazole + S-adenosyl-L-methionine = 4-amino-2-methyl-5-(phosphooxymethyl)pyrimidine + CO + 5'-deoxyadenosine + formate + L-methionine + 3 H(+). Its pathway is cofactor biosynthesis; thiamine diphosphate biosynthesis. Functionally, catalyzes the synthesis of the hydroxymethylpyrimidine phosphate (HMP-P) moiety of thiamine from aminoimidazole ribotide (AIR) in a radical S-adenosyl-L-methionine (SAM)-dependent reaction. This is Phosphomethylpyrimidine synthase from Alkaliphilus metalliredigens (strain QYMF).